A 300-amino-acid polypeptide reads, in one-letter code: Pleckstrin homology domain-containing family A member 3 (300 aa).

The PH domain occupies 1–93 (MEGVLYKWTN…WLVALGSSKA (93 aa)). Residues 1–100 (MEGVLYKWTN…SKACLTDTRT (100 aa)) form an interaction with SACM1L region. An interaction with VAPA and VAPB region spans residues 97–300 (DTRTKKEKEI…SEDTLPSFSS (204 aa)). Positions 197 to 300 (PVSPSPVQMM…SEDTLPSFSS (104 aa)) are disordered. 2 positions are modified to phosphoserine: Ser236 and Ser244. The segment covering 279–290 (EESRLMAKKQSE) has biased composition (basic and acidic residues).

As to quaternary structure, interacts with GTP-bound ARF1. Interacts with SACM1L and VAPA and/or VAPB to form a ternary complex. As to expression, widely expressed.

The protein localises to the golgi apparatus. It is found in the trans-Golgi network membrane. Its function is as follows. Plays a role in regulation of vesicular cargo transport from the trans-Golgi network (TGN) to the plasma membrane. Regulates Golgi phosphatidylinositol 4-phosphate (PtdIns(4)P) levels and activates the PtdIns(4)P phosphatase activity of SACM1L when it binds PtdIns(4)P in 'trans' configuration. Binds preferentially to PtdIns(4)P. Negatively regulates APOB secretion from hepatocytes. The sequence is that of Pleckstrin homology domain-containing family A member 3 (PLEKHA3) from Homo sapiens (Human).